Here is a 265-residue protein sequence, read N- to C-terminus: Zwei Ig domain protein zig-1 (265 aa).

An N-terminal signal peptide occupies residues 1-17 (MKNLLLITFFVVSTVTA). The Extracellular portion of the chain corresponds to 18-232 (LGGRGSKSAL…KMVDVRSEFQ (215 aa)). 2 Ig-like C2-type domains span residues 41–108 (HATD…TPHG) and 120–220 (PVVH…MLLV). 2 N-linked (GlcNAc...) asparagine glycosylation sites follow: Asn83 and Asn193. A disulfide bridge connects residues Cys155 and Cys202. Residues 233–253 (WVYPLAVILITIFLLVVIIVF) traverse the membrane as a helical segment. The Cytoplasmic segment spans residues 254–265 (CEWRNKKSTSKA).

In terms of tissue distribution, expressed in neurons and body wall muscles.

The protein localises to the cell membrane. In terms of biological role, probably not involved in maintaining the position of ASI and ASH head neuron cell bodies and ventral nerve cord axons of PVQ, PVP, RMEV, AVK and HSN neurons. The protein is Zwei Ig domain protein zig-1 of Caenorhabditis elegans.